The chain runs to 355 residues: Protein HGH1 homolog (355 aa).

The segment at aspartate 324–isoleucine 355 is disordered. Acidic residues-rich tracts occupy residues glutamate 325 to glutamate 335 and glutamate 344 to isoleucine 355.

The protein belongs to the HGH1 family.

The polypeptide is Protein HGH1 homolog (Dictyostelium discoideum (Social amoeba)).